The chain runs to 1188 residues: Integrin alpha-11 (1188 aa).

The first 22 residues, 1–22 (MDFPRGLLVAWTLSLWPGFTDT), serve as a signal peptide directing secretion. At 23–1141 (FNMDTRNPRV…ISKQEDWQVP (1119 aa)) the chain is on the extracellular side. 2 FG-GAP repeats span residues 24 to 85 (NMDT…NCTK) and 91 to 151 (VTLS…FSKT). Cys76 and Cys83 are disulfide-bonded. 2 N-linked (GlcNAc...) asparagine glycosylation sites follow: Asn82 and Asn95. 2 cysteine pairs are disulfide-bonded: Cys121-Cys139 and Cys129-Cys159. A VWFA domain is found at 164–345 (DIVIVLDGSN…AALKDIVDAL (182 aa)). N-linked (GlcNAc...) asparagine glycans are attached at residues Asn291, Asn331, Asn358, Asn449, and Asn462. 5 FG-GAP repeats span residues 355–406 (TNKN…VIPH), 411–461 (LKEF…SMHN), 462–527 (NRSL…RFVY), 528–586 (NGTL…NILK), and 590–650 (QRIT…FEPS). Ca(2+) contacts are provided by Asp488, Asn490, Asp492, and Asp496. N-linked (GlcNAc...) asparagine glycosylation occurs at Asn528. Ca(2+) contacts are provided by Asp551, Asn553, Asp555, Asp559, Asp613, Asn615, Asp617, and Asp621. A glycan (N-linked (GlcNAc...) asparagine) is linked at Asn642. Disulfide bonds link Cys659-Cys668, Cys674-Cys729, and Cys781-Cys787. N-linked (GlcNAc...) asparagine glycosylation occurs at Asn694. The N-linked (GlcNAc...) asparagine glycan is linked to Asn857. Cys881 and Cys893 are disulfide-bonded. Asn894, Asn973, Asn1031, Asn1039, and Asn1059 each carry an N-linked (GlcNAc...) asparagine glycan. The chain crosses the membrane as a helical span at residues 1142 to 1164 (IWIIVGSTLGGLLLLALLVLALW). Residues 1165–1188 (KLGFFKSAKRKREPGLGPIPKELK) lie on the Cytoplasmic side of the membrane.

Belongs to the integrin alpha chain family. Heterodimer of an alpha and a beta subunit. Alpha-11 associates with beta-1. Interacts with RAB21.

The protein localises to the membrane. Integrin alpha-11/beta-1 is a receptor for collagen. This Mus musculus (Mouse) protein is Integrin alpha-11 (Itga11).